Reading from the N-terminus, the 137-residue chain is Bacteriohemerythrin (137 aa).

Residues His-21, His-53, Glu-57, His-72, His-76, His-112, and Asp-117 each coordinate Fe cation.

The protein belongs to the hemerythrin family. Monomer.

In terms of biological role, oxygen-binding protein. May be involved in a storage mechanism or for delivery to oxygen-requiring enzymes. The oxygen-binding site contains two iron atoms. This is Bacteriohemerythrin from Ralstonia nicotianae (strain ATCC BAA-1114 / GMI1000) (Ralstonia solanacearum).